Reading from the N-terminus, the 445-residue chain is Argininosuccinate synthase (445 aa).

ATP contacts are provided by residues 17 to 25 and A43; that span reads AFSGGLDTS. Y99 provides a ligand contact to L-citrulline. 2 residues coordinate ATP: G129 and T131. Residues T131, N135, and D136 each coordinate L-aspartate. L-citrulline is bound at residue N135. Residue D136 participates in ATP binding. L-citrulline is bound by residues R139 and S192. D194 lines the ATP pocket. Residues T201, E203, and E280 each contribute to the L-citrulline site.

Belongs to the argininosuccinate synthase family. Type 2 subfamily. As to quaternary structure, homotetramer.

It localises to the cytoplasm. The catalysed reaction is L-citrulline + L-aspartate + ATP = 2-(N(omega)-L-arginino)succinate + AMP + diphosphate + H(+). The protein operates within amino-acid biosynthesis; L-arginine biosynthesis; L-arginine from L-ornithine and carbamoyl phosphate: step 2/3. The polypeptide is Argininosuccinate synthase (Burkholderia ambifaria (strain MC40-6)).